The following is a 453-amino-acid chain: Beta-agarase AgaB34 (453 aa).

The N-terminal stretch at 1-23 is a signal peptide; that stretch reads MKGFTKHSILMACSIGLAINATA. The 278-residue stretch at 24-301 folds into the GH16 domain; sequence ADWDNIPIPA…WIRVYKPTGG (278 aa). Residue E147 is the Nucleophile of the active site. E152 acts as the Proton donor in catalysis. The region spanning 313-453 is the Ricin B-type lectin domain; the sequence is PSGYTNLQLA…GATNQRFKFL (141 aa). 3 disulfide bridges follow: C327–C346, C375–C394, and C423–C442.

This sequence belongs to the glycosyl hydrolase 16 family.

Its subcellular location is the secreted. The enzyme catalyses Hydrolysis of (1-&gt;4)-beta-D-galactosidic linkages in agarose, giving the tetramer as the predominant product.. The sequence is that of Beta-agarase AgaB34 from Agarivorans albus.